The sequence spans 33 residues: Brevinin-2Eb (33 aa).

An intrachain disulfide couples cysteine 27 to cysteine 33.

Belongs to the frog skin active peptide (FSAP) family. Brevinin subfamily. As to expression, expressed by the skin glands.

The protein resides in the secreted. In terms of biological role, shows antibacterial activity against representative Gram-negative and Gram-positive bacterial species, and hemolytic activity. This chain is Brevinin-2Eb, found in Pelophylax lessonae (Pool frog).